Here is a 123-residue protein sequence, read N- to C-terminus: Small ribosomal subunit protein uS12 (123 aa).

The residue at position 89 (Asp89) is a 3-methylthioaspartic acid.

This sequence belongs to the universal ribosomal protein uS12 family. As to quaternary structure, part of the 30S ribosomal subunit. Contacts proteins S8 and S17. May interact with IF1 in the 30S initiation complex.

Functionally, with S4 and S5 plays an important role in translational accuracy. Interacts with and stabilizes bases of the 16S rRNA that are involved in tRNA selection in the A site and with the mRNA backbone. Located at the interface of the 30S and 50S subunits, it traverses the body of the 30S subunit contacting proteins on the other side and probably holding the rRNA structure together. The combined cluster of proteins S8, S12 and S17 appears to hold together the shoulder and platform of the 30S subunit. This is Small ribosomal subunit protein uS12 from Brucella anthropi (strain ATCC 49188 / DSM 6882 / CCUG 24695 / JCM 21032 / LMG 3331 / NBRC 15819 / NCTC 12168 / Alc 37) (Ochrobactrum anthropi).